A 120-amino-acid polypeptide reads, in one-letter code: Large ribosomal subunit protein P3y (120 aa).

The span at 81 to 92 (GGAAAGGGGGGE) shows a compositional bias: gly residues. The segment at 81–120 (GGAAAGGGGGGEAAAATKEEEKKKEESEEEEGDFGFDLFG) is disordered. The segment covering 97–106 (TKEEEKKKEE) has biased composition (basic and acidic residues).

The protein belongs to the eukaryotic ribosomal protein P1/P2 family.

Functionally, plays an important role in the elongation step of protein synthesis. The sequence is that of Large ribosomal subunit protein P3y (RPP3B) from Arabidopsis thaliana (Mouse-ear cress).